A 528-amino-acid polypeptide reads, in one-letter code: Purine-cytosine permease FCY21 (528 aa).

Residues 1–90 (MPQTHEMSLN…DDSILNAASM (90 aa)) are Cytoplasmic-facing. Residue Ser-43 is modified to Phosphoserine. A Phosphothreonine modification is found at Thr-46. The chain crosses the membrane as a helical span at residues 91-111 (WFSANMVLPAYAIGALGPMVF). The Extracellular segment spans residues 112 to 118 (DLNFGQS). Residues 119–139 (VFVIIFFNLLGLVSVAFFSVF) traverse the membrane as a helical segment. Residues 140–161 (GAELGLRQMILSRYLVGNIAAR) lie on the Cytoplasmic side of the membrane. Residues 162 to 182 (IFSFINFIACIGWGIVNTVAS) form a helical membrane-spanning segment. Over 183-198 (SQVLNMVNPGHQCPLW) the chain is Extracellular. A helical transmembrane segment spans residues 199-219 (AGCIVIIGATVIVTFFGYGVI). The Cytoplasmic segment spans residues 220-221 (HA). Residues 222–242 (YEKWAWVPNFAVFLVIIARLA) traverse the membrane as a helical segment. The Extracellular portion of the chain corresponds to 243–260 (RSKKFVLGEWTSGPTTAG). Residues 261-281 (NVLSFGSTVYGFAAGWTTYAA) form a helical membrane-spanning segment. The Cytoplasmic portion of the chain corresponds to 282–295 (DYTVYMPRKTNKYK). Residues 296 to 316 (IFFSLVVGLATPLYFTMILGA) traverse the membrane as a helical segment. Residues 317-340 (AVAMAAIGDPAWKTYYDENSIGGL) are Extracellular-facing. A helical transmembrane segment spans residues 341–361 (TFAVLVPNSVHGFGQFCCVLL). Over 362–393 (SLSTIANNVPNMYTIALSVQATWEPLAKVPRV) the chain is Cytoplasmic. A helical membrane pass occupies residues 394 to 414 (IWTLLGNAAALGIAIPACYYF). Residues 415–416 (ST) are Extracellular-facing. The chain crosses the membrane as a helical span at residues 417–437 (FMNYFMDSIGYYLAIYIAIAC). Over 438 to 460 (SEHFIYRRSFSAYNVDDWDSWER) the chain is Cytoplasmic. Residues 461–481 (LPIGIAGTAALIVGAFGVALG) traverse the membrane as a helical segment. At 482–493 (MCQTYWVGEISR) the chain is on the extracellular side. Residues 494–514 (LIGDYGGDIGFELGLSWAFIV) form a helical membrane-spanning segment. The Cytoplasmic segment spans residues 515-528 (YNIARPFELKYFGR).

This sequence belongs to the purine-cytosine permease (2.A.39) family.

It localises to the membrane. Its function is as follows. Probable purine-cytosine permease. The chain is Purine-cytosine permease FCY21 (FCY21) from Saccharomyces cerevisiae (strain ATCC 204508 / S288c) (Baker's yeast).